The following is a 405-amino-acid chain: Mucosal addressin cell adhesion molecule 1 (405 aa).

The N-terminal stretch at 1 to 21 (MESILALLLALALVPYQLSRG) is a signal peptide. Ig-like domains lie at 22 to 109 (QSFQ…ILVY) and 110 to 227 (AFPD…TSPK). The Extracellular segment spans residues 22–364 (QSFQVNPPES…PGQVTPNSSS (343 aa)). Disulfide bonds link Cys45–Cys91, Cys49–Cys95, and Cys132–Cys200. The interval 221–257 (QSQTSPKPPNTTSAEPYILTSSSTAEAVSTGLNITTL) is mucin-like. N-linked (GlcNAc...) asparagine glycosylation is found at Asn230 and Asn253. Positions 255-275 (TTLPSAPPYPKLSPRTLSSEG) are disordered. One can recognise an Ig-like 3 domain in the interval 258-357 (PSAPPYPKLS…EVTNLYVPGQ (100 aa)). Cys293 and Cys341 are disulfide-bonded. An N-linked (GlcNAc...) asparagine glycan is attached at Asn361. A helical membrane pass occupies residues 365-385 (TVVLWIGSLVLGLLALVFLAY). The Cytoplasmic portion of the chain corresponds to 386 to 405 (RLWKCYRPGPRPDTSSCTHL).

Homodimer. Post-translationally, O-glycosylated; contains syalic acid. The Ser/Thr-rich mucin-like domain may provide possible sites for O-glycosylation. As to expression, highly expressed on high endothelial venules (HEV) of organized intestinal lymphoid tissues like the Peyer patches and mesenteric lymph nodes, and in the lamina propria of the intestine. Some expression found in the spleen, and low levels of expression in the peripheral lymph nodes and the lactating mammary gland. No expression was detected in the liver, kidneys, lungs or in normal brain. Expressed as well in brain endothelioma cells, and mucosal tissues which are in a chronic state of inflammation, such as inflamed pancreas.

Its subcellular location is the membrane. In terms of biological role, cell adhesion leukocyte receptor expressed by mucosal venules, helps to direct lymphocyte traffic into mucosal tissues including the Peyer patches and the intestinal lamina propria. It can bind both the integrin alpha-4/beta-7 and L-selectin, regulating both the passage and retention of leukocytes. Both isoform 1 and isoform 2 can adhere to integrin alpha-4/beta-7. Isoform 2, lacking the mucin-like domain, may be specialized in supporting integrin alpha-4/beta-7-dependent adhesion strengthening, independent of L-selectin binding. The sequence is that of Mucosal addressin cell adhesion molecule 1 (Madcam1) from Mus musculus (Mouse).